We begin with the raw amino-acid sequence, 532 residues long: Developmental and secondary metabolism regulator ve1 (532 aa).

Residues Asn26–Arg220 form the Velvet domain. Residues Glu40 to Cys45 carry the Nuclear localization signal motif. The segment covering Val217–Asp229 has biased composition (basic residues). 2 disordered regions span residues Val217–Ser440 and Pro458–Gly520. Over residues Gly233–Gly250 the composition is skewed to low complexity. 2 stretches are compositionally biased toward basic and acidic residues: residues Phe251–Arg260 and Ser283–Arg294. A compositionally biased stretch (pro residues) spans Tyr302–Ser317. Over residues Ser397–Thr411 the composition is skewed to low complexity. A PEST region spans residues Met435 to Leu463. Residues Phe481–Arg493 show a composition bias toward polar residues.

The protein belongs to the velvet family. VeA subfamily. In terms of assembly, component of the heterotrimeric velvet complex composed of laeA, ve1 and velB; Ve1 acting as a bridging protein between laeA and velB. Interacts directly with laeA and velB.

The protein localises to the nucleus. Its subcellular location is the cytoplasm. Functionally, component of the velvet transcription factor complex that controls sexual/asexual developmental ratio in response to light, promoting sexual development in the darkness while stimulating asexual sporulation under illumination. The velvet complex hat acts as a global regulator for secondary metabolite gene expression. Controls the expression of the aurofusarin and trichothecene gene clusters. Also controls the expression of the deoxynivalenol (DON) gene cluster. Regulates hyphal growth and pigment formation. Acts as a positive regulator of virulence. The protein is Developmental and secondary metabolism regulator ve1 of Gibberella zeae (strain ATCC MYA-4620 / CBS 123657 / FGSC 9075 / NRRL 31084 / PH-1) (Wheat head blight fungus).